We begin with the raw amino-acid sequence, 396 residues long: MSQEFNEIDANTIETNYDNVVYSFDDLNLKPNIVRGIFGYGYESPSAIQQRAILPITEGRDVLAQAQSGTGKTATFTISALQRIDENLKATQALILAPTRELALQIQNVITHIGLYLNVTVHASIGGTSMKDDIEAFKSGVQIVVGTPGRVFDMIERRFFRTDKVKMFIMDEADEMLSSGFKEQIYNIFRLLPETTQVVLLSATMPQDVLEVTTKFMNNPVRILVKKDELTLEGIKQFYINVEQEDFKFDCLCDLYDSISVTQAVIFCNTRSKVEFLTTKLKAENFTVSAIHADLPQSDRDTIMNEFRSGSSRILIATDLLARGIDVQQVSLVINYDLPANKENYIHRIGRGGRFGRKGVAINFVTDEDVGMMREIEKFYSTQIEEMPANIGELFN.

Positions 22–50 (YSFDDLNLKPNIVRGIFGYGYESPSAIQQ) match the Q motif motif. Residues 53–223 (ILPITEGRDV…TKFMNNPVRI (171 aa)) form the Helicase ATP-binding domain. An ATP-binding site is contributed by 66–73 (AQSGTGKT). A DEAD box motif is present at residues 171–174 (DEAD). Residues 234–395 (GIKQFYINVE…EMPANIGELF (162 aa)) enclose the Helicase C-terminal domain.

This sequence belongs to the DEAD box helicase family. eIF4A subfamily. As to quaternary structure, component of the eIF4F complex, which composition varies with external and internal environmental conditions. It is composed of at least eIF4A, eIF4E and eIF4G.

Its subcellular location is the cytoplasm. It catalyses the reaction ATP + H2O = ADP + phosphate + H(+). ATP-dependent RNA helicase which is a subunit of the eIF4F complex involved in cap recognition and is required for mRNA binding to ribosome. In the current model of translation initiation, eIF4A unwinds RNA secondary structures in the 5'-UTR of mRNAs which is necessary to allow efficient binding of the small ribosomal subunit, and subsequent scanning for the initiator codon. The polypeptide is ATP-dependent RNA helicase eIF4A (TIF1) (Meyerozyma guilliermondii (strain ATCC 6260 / CBS 566 / DSM 6381 / JCM 1539 / NBRC 10279 / NRRL Y-324) (Yeast)).